The primary structure comprises 362 residues: 3-dehydroquinate synthase (362 aa).

Residues 71-76 (DGEQYK), 105-109 (GVVGD), 129-130 (TT), Lys142, Lys151, and 169-172 (CLKT) contribute to the NAD(+) site. Positions 184, 247, and 264 each coordinate Zn(2+).

Belongs to the sugar phosphate cyclases superfamily. Dehydroquinate synthase family. Co(2+) serves as cofactor. Requires Zn(2+) as cofactor. It depends on NAD(+) as a cofactor.

Its subcellular location is the cytoplasm. The enzyme catalyses 7-phospho-2-dehydro-3-deoxy-D-arabino-heptonate = 3-dehydroquinate + phosphate. The protein operates within metabolic intermediate biosynthesis; chorismate biosynthesis; chorismate from D-erythrose 4-phosphate and phosphoenolpyruvate: step 2/7. In terms of biological role, catalyzes the conversion of 3-deoxy-D-arabino-heptulosonate 7-phosphate (DAHP) to dehydroquinate (DHQ). This Escherichia coli O6:K15:H31 (strain 536 / UPEC) protein is 3-dehydroquinate synthase.